The following is a 411-amino-acid chain: Serine hydroxymethyltransferase (411 aa).

(6S)-5,6,7,8-tetrahydrofolate is bound by residues leucine 119 and 123–125 (GHL). Lysine 228 is modified (N6-(pyridoxal phosphate)lysine). 351 to 353 (SPF) provides a ligand contact to (6S)-5,6,7,8-tetrahydrofolate.

The protein belongs to the SHMT family. As to quaternary structure, homodimer. Pyridoxal 5'-phosphate serves as cofactor.

It is found in the cytoplasm. It catalyses the reaction (6R)-5,10-methylene-5,6,7,8-tetrahydrofolate + glycine + H2O = (6S)-5,6,7,8-tetrahydrofolate + L-serine. It participates in one-carbon metabolism; tetrahydrofolate interconversion. Its pathway is amino-acid biosynthesis; glycine biosynthesis; glycine from L-serine: step 1/1. Functionally, catalyzes the reversible interconversion of serine and glycine with tetrahydrofolate (THF) serving as the one-carbon carrier. This reaction serves as the major source of one-carbon groups required for the biosynthesis of purines, thymidylate, methionine, and other important biomolecules. Also exhibits THF-independent aldolase activity toward beta-hydroxyamino acids, producing glycine and aldehydes, via a retro-aldol mechanism. In Clostridium botulinum (strain Alaska E43 / Type E3), this protein is Serine hydroxymethyltransferase.